We begin with the raw amino-acid sequence, 184 residues long: Cytidylate kinase (184 aa).

8–16 (GQPGSGKTT) contacts ATP.

Belongs to the cytidylate kinase family. Type 2 subfamily.

It localises to the cytoplasm. It catalyses the reaction CMP + ATP = CDP + ADP. It carries out the reaction dCMP + ATP = dCDP + ADP. The sequence is that of Cytidylate kinase from Pyrobaculum neutrophilum (strain DSM 2338 / JCM 9278 / NBRC 100436 / V24Sta) (Thermoproteus neutrophilus).